A 120-amino-acid chain; its full sequence is Small ribosomal subunit protein bS16 (120 aa).

The tract at residues 81 to 120 is disordered; it reads GLAKRPARNNPQKAEPGEKAKERAAKRAEKAAAPAEDAAA. Residues 95–110 show a composition bias toward basic and acidic residues; that stretch reads EPGEKAKERAAKRAEK. Positions 111-120 are enriched in low complexity; that stretch reads AAAPAEDAAA.

It belongs to the bacterial ribosomal protein bS16 family.

This is Small ribosomal subunit protein bS16 from Methylobacterium radiotolerans (strain ATCC 27329 / DSM 1819 / JCM 2831 / NBRC 15690 / NCIMB 10815 / 0-1).